We begin with the raw amino-acid sequence, 193 residues long: Holliday junction branch migration complex subunit RuvA (193 aa).

The tract at residues 1–64 (MIGRIAGILL…EDANLLYGFL (64 aa)) is domain I. A domain II region spans residues 65 to 139 (TPQERTTFRE…GKLGADLGEL (75 aa)). Residues 139 to 143 (LAGAA) are flexible linker. The domain III stretch occupies residues 144 to 193 (SPSDHATDILNALLALGYSEKEGLAAIKNVPAGTGVSEGIKLALKALSKV).

It belongs to the RuvA family. As to quaternary structure, homotetramer. Forms an RuvA(8)-RuvB(12)-Holliday junction (HJ) complex. HJ DNA is sandwiched between 2 RuvA tetramers; dsDNA enters through RuvA and exits via RuvB. An RuvB hexamer assembles on each DNA strand where it exits the tetramer. Each RuvB hexamer is contacted by two RuvA subunits (via domain III) on 2 adjacent RuvB subunits; this complex drives branch migration. In the full resolvosome a probable DNA-RuvA(4)-RuvB(12)-RuvC(2) complex forms which resolves the HJ.

Its subcellular location is the cytoplasm. Its function is as follows. The RuvA-RuvB-RuvC complex processes Holliday junction (HJ) DNA during genetic recombination and DNA repair, while the RuvA-RuvB complex plays an important role in the rescue of blocked DNA replication forks via replication fork reversal (RFR). RuvA specifically binds to HJ cruciform DNA, conferring on it an open structure. The RuvB hexamer acts as an ATP-dependent pump, pulling dsDNA into and through the RuvAB complex. HJ branch migration allows RuvC to scan DNA until it finds its consensus sequence, where it cleaves and resolves the cruciform DNA. This Burkholderia lata (strain ATCC 17760 / DSM 23089 / LMG 22485 / NCIMB 9086 / R18194 / 383) protein is Holliday junction branch migration complex subunit RuvA.